A 141-amino-acid chain; its full sequence is UPF0225 protein Rmet_0111 (141 aa).

It belongs to the UPF0225 family.

This chain is UPF0225 protein Rmet_0111, found in Cupriavidus metallidurans (strain ATCC 43123 / DSM 2839 / NBRC 102507 / CH34) (Ralstonia metallidurans).